Here is a 186-residue protein sequence, read N- to C-terminus: Ribosome-recycling factor (186 aa).

Composition is skewed to basic and acidic residues over residues 134 to 169 and 176 to 186; these read RDAN…KKAE and AKAREAEVMED. Residues 134 to 186 form a disordered region; the sequence is RDANKAAETAEKDKEMTEDDRDKTKDQVQELTKKAETNVNESAKAREAEVMED.

Belongs to the RRF family.

Its subcellular location is the cytoplasm. Responsible for the release of ribosomes from messenger RNA at the termination of protein biosynthesis. May increase the efficiency of translation by recycling ribosomes from one round of translation to another. The polypeptide is Ribosome-recycling factor (Rhodopirellula baltica (strain DSM 10527 / NCIMB 13988 / SH1)).